Reading from the N-terminus, the 315-residue chain is Putative ankyrin repeat protein R600 (315 aa).

ANK repeat units follow at residues 79 to 108 (NECR…NVHV), 118 to 152 (SGFG…MVGT), 153 to 182 (DTCN…DIFS), 184 to 211 (QSKL…DVTD), and 212 to 240 (DNNS…DMNT).

In Acanthamoeba polyphaga mimivirus (APMV), this protein is Putative ankyrin repeat protein R600.